Here is a 272-residue protein sequence, read N- to C-terminus: Endoplasmic reticulum resident protein 27 (272 aa).

An N-terminal signal peptide occupies residues 1-25; that stretch reads MEAMPSRCLFLLFLSTCKLSPEVVA. The Thioredoxin domain occupies 38–151; the sequence is EPMRLTDVQA…LVTEYNAITA (114 aa). A glycan (N-linked (GlcNAc...) asparagine) is linked at asparagine 99. Residues 229–232 form a PDIA3-binding site region; sequence DKWD. The Prevents secretion from ER motif lies at 269–272; that stretch reads KVEL.

It belongs to the protein disulfide isomerase family. In terms of assembly, interacts with PDIA3.

It is found in the endoplasmic reticulum lumen. Specifically binds unfolded proteins and may recruit protein disulfide isomerase PDIA3 to unfolded substrates. Binds protein substrates via a hydrophobic pocket in the C-terminal domain. May play a role in the unfolded stress response. The chain is Endoplasmic reticulum resident protein 27 (ERP27) from Bos taurus (Bovine).